A 259-amino-acid chain; its full sequence is Phosphatidylserine decarboxylase proenzyme (259 aa).

Catalysis depends on charge relay system; for autoendoproteolytic cleavage activity residues Asp-86, His-142, and Ser-226. The active-site Schiff-base intermediate with substrate; via pyruvic acid; for decarboxylase activity is Ser-226. At Ser-226 the chain carries Pyruvic acid (Ser); by autocatalysis.

The protein belongs to the phosphatidylserine decarboxylase family. PSD-B subfamily. Prokaryotic type I sub-subfamily. Heterodimer of a large membrane-associated beta subunit and a small pyruvoyl-containing alpha subunit. It depends on pyruvate as a cofactor. Post-translationally, is synthesized initially as an inactive proenzyme. Formation of the active enzyme involves a self-maturation process in which the active site pyruvoyl group is generated from an internal serine residue via an autocatalytic post-translational modification. Two non-identical subunits are generated from the proenzyme in this reaction, and the pyruvate is formed at the N-terminus of the alpha chain, which is derived from the carboxyl end of the proenzyme. The autoendoproteolytic cleavage occurs by a canonical serine protease mechanism, in which the side chain hydroxyl group of the serine supplies its oxygen atom to form the C-terminus of the beta chain, while the remainder of the serine residue undergoes an oxidative deamination to produce ammonia and the pyruvoyl prosthetic group on the alpha chain. During this reaction, the Ser that is part of the protease active site of the proenzyme becomes the pyruvoyl prosthetic group, which constitutes an essential element of the active site of the mature decarboxylase.

It localises to the cell membrane. It carries out the reaction a 1,2-diacyl-sn-glycero-3-phospho-L-serine + H(+) = a 1,2-diacyl-sn-glycero-3-phosphoethanolamine + CO2. The protein operates within phospholipid metabolism; phosphatidylethanolamine biosynthesis; phosphatidylethanolamine from CDP-diacylglycerol: step 2/2. Its function is as follows. Catalyzes the formation of phosphatidylethanolamine (PtdEtn) from phosphatidylserine (PtdSer). This is Phosphatidylserine decarboxylase proenzyme from Halalkalibacterium halodurans (strain ATCC BAA-125 / DSM 18197 / FERM 7344 / JCM 9153 / C-125) (Bacillus halodurans).